The chain runs to 150 residues: Protein-export protein SecB (150 aa).

This sequence belongs to the SecB family. In terms of assembly, homotetramer, a dimer of dimers. One homotetramer interacts with 1 SecA dimer.

Its subcellular location is the cytoplasm. Functionally, one of the proteins required for the normal export of preproteins out of the cell cytoplasm. It is a molecular chaperone that binds to a subset of precursor proteins, maintaining them in a translocation-competent state. It also specifically binds to its receptor SecA. This is Protein-export protein SecB from Psychrobacter cryohalolentis (strain ATCC BAA-1226 / DSM 17306 / VKM B-2378 / K5).